The primary structure comprises 100 residues: Large ribosomal subunit protein bL21 (100 aa).

This sequence belongs to the bacterial ribosomal protein bL21 family. As to quaternary structure, part of the 50S ribosomal subunit. Contacts protein L20.

This protein binds to 23S rRNA in the presence of protein L20. This Corynebacterium urealyticum (strain ATCC 43042 / DSM 7109) protein is Large ribosomal subunit protein bL21.